The sequence spans 181 residues: ATP synthase subunit delta (181 aa).

This sequence belongs to the ATPase delta chain family. As to quaternary structure, F-type ATPases have 2 components, F(1) - the catalytic core - and F(0) - the membrane proton channel. F(1) has five subunits: alpha(3), beta(3), gamma(1), delta(1), epsilon(1). F(0) has three main subunits: a(1), b(2) and c(10-14). The alpha and beta chains form an alternating ring which encloses part of the gamma chain. F(1) is attached to F(0) by a central stalk formed by the gamma and epsilon chains, while a peripheral stalk is formed by the delta and b chains.

It is found in the cell membrane. F(1)F(0) ATP synthase produces ATP from ADP in the presence of a proton or sodium gradient. F-type ATPases consist of two structural domains, F(1) containing the extramembraneous catalytic core and F(0) containing the membrane proton channel, linked together by a central stalk and a peripheral stalk. During catalysis, ATP synthesis in the catalytic domain of F(1) is coupled via a rotary mechanism of the central stalk subunits to proton translocation. In terms of biological role, this protein is part of the stalk that links CF(0) to CF(1). It either transmits conformational changes from CF(0) to CF(1) or is implicated in proton conduction. The protein is ATP synthase subunit delta of Mycoplasma capricolum subsp. capricolum (strain California kid / ATCC 27343 / NCTC 10154).